We begin with the raw amino-acid sequence, 211 residues long: Bifunctional transcriptional activator/DNA repair enzyme AdaA (211 aa).

The Nucleophile; methyl group acceptor from methylphosphotriester role is filled by Cys54. Zn(2+) is bound by residues Cys54, Cys58, Cys85, and Cys88. The region spanning 102–200 is the HTH araC/xylS-type domain; sequence DLITEYIDKN…GQTPARFRQM (99 aa). The segment at residues 119-140 is a DNA-binding region (H-T-H motif); that stretch reads ESLADICHGSPYHMHRTFKKIK.

Zn(2+) serves as cofactor.

It catalyses the reaction (2'-deoxyribonucleoside 5'-methylphosphotriester)-DNA + L-cysteinyl-[protein] = 2'-deoxyribonucleotide-DNA + S-methyl-L-cysteinyl-[protein] + H(+). Its function is as follows. Is involved in the adaptive response to alkylation damage in DNA caused by alkylating agents. Repairs the methylphosphotriester lesions in DNA by a direct and irreversible transfer of the methyl group to one of its own cysteine residues. In terms of biological role, the methylation of AdaA by methylphosphotriesters in DNA leads to its activation as a transcriptional regulator that activates the transcription of the ada operon which consists of adaA and adaB, and of the adjacent gene alkA. This chain is Bifunctional transcriptional activator/DNA repair enzyme AdaA (adaA), found in Bacillus subtilis (strain 168).